Here is a 185-residue protein sequence, read N- to C-terminus: ADP-ribosylation factor (185 aa).

Gly-2 carries the N-myristoyl glycine lipid modification. GTP contacts are provided by residues 27–34, 70–74, and 129–132; these read GLDAAGKT, DVGGQ, and NKQD.

It belongs to the small GTPase superfamily. Arf family.

It localises to the golgi apparatus. GTP-binding protein involved in protein trafficking; may modulate vesicle budding and uncoating within the Golgi apparatus. The protein is ADP-ribosylation factor of Neurospora crassa (strain ATCC 24698 / 74-OR23-1A / CBS 708.71 / DSM 1257 / FGSC 987).